Consider the following 447-residue polypeptide: Zinc finger protein ZIC 1 (447 aa).

Residues 225–260 (LICKWIEPEQLANPKKSCNKTFSTMHELVTHVTVEH) form a C2H2-type 1; atypical zinc finger. A C2H2-type 2; atypical zinc finger spans residues 269 to 296 (HICFWEECPREGKPFKAKYKLVNHIRVH). 3 consecutive C2H2-type zinc fingers follow at residues 302-326 (FPCPFPGCGKVFARSENLKIHKRTH), 332-356 (FKCEFEGCDRRFANSSDRKKHMHVH), and 362-384 (YLCKMCDKSYTHPSSLRKHMKVH). A disordered region spans residues 375-434 (SSLRKHMKVHESSSQGSQPSPAASSGYESSTPPTIVSPTTDNPTTSSMSPSSSAVHHTAG). Over residues 386–427 (SSSQGSQPSPAASSGYESSTPPTIVSPTTDNPTTSSMSPSSS) the composition is skewed to low complexity.

The protein belongs to the GLI C2H2-type zinc-finger protein family. In terms of assembly, interacts (via the C2H2-type domains 3, 4 and 5) with MDFIC (via the C2H2-type domains 3, 4 and 5). Interacts with GLI1; the interaction enhances transcription activation. Interacts with GLI2. Interacts with GLI3; the interaction enhances transcription activation. Expressed in osteoblasts (at protein level). Expressed in the CNS. A high level expression is seen in the cerebellum, while a low level expression is seen in the olfactory bulb, diencephalon, and brainstem. Expressed in lumbar spine and iliac crest.

It localises to the nucleus. The protein localises to the cytoplasm. Its function is as follows. Acts as a transcriptional activator. Involved in neurogenesis. Plays important roles in the early stage of organogenesis of the CNS, as well as during dorsal spinal cord development and maturation of the cerebellum. Involved in the spatial distribution of mossy fiber (MF) neurons within the pontine gray nucleus (PGN). Plays a role in the regulation of MF axon pathway choice. Promotes MF migration towards ipsilaterally-located cerebellar territories. May have a role in shear flow mechanotransduction in osteocytes. Retains nuclear GLI1 and GLI3 in the cytoplasm. Binds to the minimal GLI-consensus sequence 5'-TGGGTGGTC-3'. The sequence is that of Zinc finger protein ZIC 1 (Zic1) from Mus musculus (Mouse).